The chain runs to 188 residues: Large ribosomal subunit protein eL18z (188 aa).

This sequence belongs to the eukaryotic ribosomal protein eL18 family.

In Arabidopsis thaliana (Mouse-ear cress), this protein is Large ribosomal subunit protein eL18z (RPL18A).